A 968-amino-acid chain; its full sequence is Ribonuclease E (968 aa).

Residues 39–119 (SNIYKGKITR…GTKGAALTTF (81 aa)) form the S1 motif domain. Mg(2+) contacts are provided by D303 and D346. 2 residues coordinate Zn(2+): C404 and C407. Residues 404 to 407 (CPRC) form a required for zinc-mediated homotetramerization and catalytic activity region. Residues 947–968 (IKNSAGAHSATNFSTSPVKKSE) are disordered. Polar residues predominate over residues 955–968 (SATNFSTSPVKKSE).

Belongs to the RNase E/G family. RNase E subfamily. As to quaternary structure, component of the RNA degradosome, which is a multiprotein complex involved in RNA processing and mRNA degradation. Within the RNA degradosome, RNase E assembles into a homotetramer formed by a dimer of dimers. It depends on Zn(2+) as a cofactor. The cofactor is Mg(2+).

It is found in the cytoplasm. It localises to the cell inner membrane. It carries out the reaction Endonucleolytic cleavage of single-stranded RNA in A- and U-rich regions.. Its function is as follows. Endoribonuclease that plays a central role in RNA processing and decay. Required for the maturation of 5S and 16S rRNAs and the majority of tRNAs. Also involved in the degradation of most mRNAs. The protein is Ribonuclease E of Buchnera aphidicola subsp. Schizaphis graminum (strain Sg).